The following is a 572-amino-acid chain: Mitochondrial distribution and morphology protein 34 (572 aa).

Residues 1-195 enclose the SMP-LTD domain; it reads MAFNFNWSPL…LPAIIHRLSL (195 aa). Disordered stretches follow at residues 208–236, 296–405, 455–518, and 551–572; these read LQTQ…VDAL, PSDQ…CSAP, RDTA…PFIN, and NACG…AYGH. Positions 296-347 are enriched in polar residues; the sequence is PSDQTDASGGVTSPFSPVLSRTQSQVGSMSSFPDSASMVSNQSRSSTPSHTF. The span at 358–370 shows a compositional bias: basic residues; the sequence is RHSKAHARKRKKR. Residues 371 to 381 are compositionally biased toward basic and acidic residues; that stretch reads VVDLRRPKTTD. Composition is skewed to polar residues over residues 387–401 and 498–511; these read SDES…TPSI and ATGS…QLPS.

Belongs to the MDM34 family. In terms of assembly, component of the ER-mitochondria encounter structure (ERMES) or MDM complex, composed of mmm1, mdm10, mdm12 and mdm34.

It localises to the mitochondrion outer membrane. Component of the ERMES/MDM complex, which serves as a molecular tether to connect the endoplasmic reticulum (ER) and mitochondria. Components of this complex are involved in the control of mitochondrial shape and protein biogenesis, and function in nonvesicular lipid trafficking between the ER and mitochondria. Mdm34 is required for the interaction of the ER-resident membrane protein mmm1 and the outer mitochondrial membrane-resident beta-barrel protein mdm10. The polypeptide is Mitochondrial distribution and morphology protein 34 (Neosartorya fischeri (strain ATCC 1020 / DSM 3700 / CBS 544.65 / FGSC A1164 / JCM 1740 / NRRL 181 / WB 181) (Aspergillus fischerianus)).